The following is a 182-amino-acid chain: MINSMQFLYLVASYLIGNILTAYIVTKLRHNVDIRDEGSGNPGARNMGRVYGKGYFIATFLGDAIKGAIVVAVAKYLFEDPTFVMLTLLAVIIGHIYPVLFKGKGGKGISTFIGGLIAFDYLIALTLLGIFIVFYLIFKGFTKPGLITIACLPICMILYSYSIVTTILSGIIIVLILYVNRE.

Helical transmembrane passes span 5 to 25 (MQFL…AYIV), 54 to 74 (GYFI…VAVA), 81 to 101 (PTFV…PVLF), 117 to 137 (IAFD…FYLI), and 157 to 177 (ILYS…VLIL).

The protein belongs to the PlsY family. Probably interacts with PlsX.

It localises to the cell membrane. It catalyses the reaction an acyl phosphate + sn-glycerol 3-phosphate = a 1-acyl-sn-glycero-3-phosphate + phosphate. Its pathway is lipid metabolism; phospholipid metabolism. Catalyzes the transfer of an acyl group from acyl-phosphate (acyl-PO(4)) to glycerol-3-phosphate (G3P) to form lysophosphatidic acid (LPA). This enzyme utilizes acyl-phosphate as fatty acyl donor, but not acyl-CoA or acyl-ACP. The protein is Glycerol-3-phosphate acyltransferase 1 of Bacillus cereus (strain ATCC 14579 / DSM 31 / CCUG 7414 / JCM 2152 / NBRC 15305 / NCIMB 9373 / NCTC 2599 / NRRL B-3711).